The chain runs to 318 residues: Thymidylate synthase (318 aa).

Residues Arg-25 and 180–181 contribute to the dUMP site; that span reads RR. The active-site Nucleophile is Cys-200. Residues 220–223, Asn-231, and 261–263 contribute to the dUMP site; these read RSGD and HIY. Asp-223 is a binding site for (6R)-5,10-methylene-5,6,7,8-tetrahydrofolate. A (6R)-5,10-methylene-5,6,7,8-tetrahydrofolate-binding site is contributed by Ala-317.

The protein belongs to the thymidylate synthase family. Bacterial-type ThyA subfamily. As to quaternary structure, homodimer.

The protein resides in the cytoplasm. It carries out the reaction dUMP + (6R)-5,10-methylene-5,6,7,8-tetrahydrofolate = 7,8-dihydrofolate + dTMP. It functions in the pathway pyrimidine metabolism; dTTP biosynthesis. In terms of biological role, catalyzes the reductive methylation of 2'-deoxyuridine-5'-monophosphate (dUMP) to 2'-deoxythymidine-5'-monophosphate (dTMP) while utilizing 5,10-methylenetetrahydrofolate (mTHF) as the methyl donor and reductant in the reaction, yielding dihydrofolate (DHF) as a by-product. This enzymatic reaction provides an intracellular de novo source of dTMP, an essential precursor for DNA biosynthesis. In Lactobacillus delbrueckii subsp. bulgaricus (strain ATCC BAA-365 / Lb-18), this protein is Thymidylate synthase.